Here is a 96-residue protein sequence, read N- to C-terminus: Co-chaperonin GroES (96 aa).

The protein belongs to the GroES chaperonin family. Heptamer of 7 subunits arranged in a ring. Interacts with the chaperonin GroEL.

The protein localises to the cytoplasm. In terms of biological role, together with the chaperonin GroEL, plays an essential role in assisting protein folding. The GroEL-GroES system forms a nano-cage that allows encapsulation of the non-native substrate proteins and provides a physical environment optimized to promote and accelerate protein folding. GroES binds to the apical surface of the GroEL ring, thereby capping the opening of the GroEL channel. This chain is Co-chaperonin GroES, found in Citrifermentans bemidjiense (strain ATCC BAA-1014 / DSM 16622 / JCM 12645 / Bem) (Geobacter bemidjiensis).